The primary structure comprises 675 residues: MMMATKGKRPLRHLTATDKIDAIQRIHDGESKASVARDIGVPESTLRGWCKNEEKLRYMSRQSAENAEKLTNEATAAALTAVAAAELFNGPPEKRLKLEQGLFGNGKLKYDDSFYKSPRGPMNGLDLSGGDKGLGVSGGDIIMNGLHGADFSSKSKEMNLKGYGADLSKHGDPKQADLSMAAISPLTSLSHLSGMSGLAQSPLALSFNEIATNLNLFAQLNNNHNLATMSNLGGLSAAQSLRNARPKANTSQSPRTSNLSDVNGDKNPSLTVRNLAKLQQKNSGDLSNGMMHGINLSDKYKQQPSAAPLGRDTNAPVDEALWYWLKSQQAMLGLNNLYSSMPRPSSPQQSSSPPQQHQQVQHHPSTQTPTPPIVSTPQPTPPSSAPSLTPEDTKNSSWFWQWYKTFGASLMPGDKSNNNTINANANSKQAAYENILYSQLTKGQNSDSLNNNAQPINLNIISSNGPENVKSEPEDLSNHNHSSSNAAAVAAPAEDLQRFNPSPSTSAKSELKQEDDEEQAGPADDESPMESKCNGKVKDVLDNFLFQNPSSNDRASPANLSIRSNNSPRRRSVSPAVSNHHVNSPEPENGDLAHKSDISEDSNHMLVADIKSSAEAVEHGEKFLKWLEACSDPNVTAMQVMQFKYLLNSIKLSAERQQQNAVSSGEERTRVRRRK.

In terms of domain architecture, HTH psq-type spans 5–56; the sequence is TKGKRPLRHLTATDKIDAIQRIHDGESKASVARDIGVPESTLRGWCKNEEKL. Positions 32–52 form a DNA-binding region, H-T-H motif; that stretch reads KASVARDIGVPESTLRGWCKN. Disordered stretches follow at residues 239-269, 337-393, 458-534, 546-596, and 655-675; these read QSLR…KNPS, LYSS…PEDT, LNII…SKCN, FQNP…AHKS, and ERQQ…RRRK. Positions 339-368 are enriched in low complexity; sequence SSMPRPSSPQQSSSPPQQHQQVQHHPSTQT. The span at 369–384 shows a compositional bias: pro residues; that stretch reads PTPPIVSTPQPTPPSS. Residues 469 to 478 show a composition bias toward basic and acidic residues; it reads VKSEPEDLSN. Low complexity predominate over residues 479–493; sequence HNHSSSNAAAVAAPA. A compositionally biased stretch (polar residues) spans 499 to 508; the sequence is FNPSPSTSAK. Residues 513–528 are compositionally biased toward acidic residues; it reads QEDDEEQAGPADDESP. The segment covering 559-579 has biased composition (low complexity); that stretch reads NLSIRSNNSPRRRSVSPAVSN.

In terms of assembly, homomers. Interacts with itself, danr, ey and dac to form a complex (or complexes) containing the RD factors.

The protein resides in the nucleus. Probable transcription factor with a role in the retinal determination (RD) network. Contributes to differentiation of antenna-specific characteristics. This Aedes aegypti (Yellowfever mosquito) protein is Protein distal antenna.